Consider the following 1360-residue polypeptide: KN motif and ankyrin repeat domains 1 (1360 aa).

Residues 30–68 (PYFVETPYGFQLDLDFVKYVDDIQKGNTIKKLNIQKRRK) form a KN motif; Interaction with TLN1 region. The short motif at 41–44 (LDLD) is the Important for binding to TLN1 element. A Nuclear export signal 1 (NES 1) motif is present at residues 43-52 (LDFVKYVDDI). A Nuclear localization signal 1 (NLS 1) motif is present at residues 65–68 (KRRK). The segment at 66–103 (RRKPSVPCPEVRAIPGHQGVWTSTESLSSSNSDDSKQC) is disordered. A compositionally biased stretch (low complexity) spans 88–103 (STESLSSSNSDDSKQC). Positions 125–134 (LETSPTFAVS) match the Nuclear export signal 2 (NES 2) motif. S186 carries the phosphoserine modification. Residues 221–253 (DYNSYVPAAPTTSSMGSSVRHSPLSSGISTPVT) are disordered. The segment covering 230 to 253 (PTTSSMGSSVRHSPLSSGISTPVT) has biased composition (polar residues). The segment at 244–339 (LSSGISTPVT…SQLELLARAR (96 aa)) is interaction with PPFIBP1. The stretch at 260–311 (LQHIREQMAIALKRLKELEEQVRTIPVLQVKISVLQEEKRQLASQLKSQRAS) forms a coiled coil. Phosphoserine is present on S325. 2 coiled-coil regions span residues 367 to 394 (FRQLTADMQALERKIQDSSCEVASELRE) and 453 to 487 (ITEADKEIELQQQTIEALKEKIYRLEVQLKETTHD). A Nuclear export signal 3 (NES 3) motif is present at residues 618 to 627 (LTLLKTNLNL). Disordered stretches follow at residues 929-954 (SQPEVEAETAEGKHSRGHEQFPMQGS) and 983-1053 (IMKK…DTRG). Basic and acidic residues-rich tracts occupy residues 938–947 (AEGKHSRGHE) and 985–995 (KKSDGNKDSNG). A Nuclear localization signal 2 (NLS 2) motif is present at residues 985–998 (KKSDGNKDSNGAKK). The segment covering 1010–1025 (ETTSSDESSSDGSSSS) has biased composition (low complexity). Acidic residues predominate over residues 1026–1047 (ESDDECDTIGYPPEEEEEEEEK). An interaction with KIF21A region spans residues 1081–1360 (EPEKEEIRER…PGPTHRGSFD (280 aa)). One copy of the ANK 0; degenerate repeat lies at 1117 to 1154 (KDMRICLNTLQHDWFRVSSQKSAVPAMVGDYIAAFEAV). 5 ANK repeats span residues 1169–1199 (NGNTALHYSVSHSNFQIVKLLLDADVCNVDH), 1203–1236 (AGYTPIMLAALAAVEAEKDMQVVEELFSCGDVNA), 1241–1270 (AGQTALMLAVSHGRIDMVKGLLACGADVNI), 1274–1306 (EGSTALMCASEHGHVEIVKLLLAQPGCNGHLED), and 1308–1337 (DGSTALSIALEAGHKDIAVLLYAHLNFSKA). The disordered stretch occupies residues 1337-1360 (AQSPSTPRLGRKTSPGPTHRGSFD).

In terms of assembly, part of a cortical microtubule stabilization complex (CMSC) composed of KANK1, PPFIA1, PPFIBP1, ERC1/ELKS, PHLDB2/LL5beta, CLASPs, KIF21A and possibly additional interactors; within CMSCs KANK1 and PHLDB2/LL5beta appear to be the core components for targeting of microtubule-binding proteins KIF21A and CLASPs, whereas PPFIA1, PPFIBP1 and ERC1/ELKS serve as scaffolds for protein clustering. Interacts (via KN motif) with TLN1 (via R7 domain); this mediates CMSC clustering around focal adhesions. Interacts (via CC1 domain, residues 244-339) with PPFIBP1. Interacts (via ANK repeats 1-5) with KIF21A (via residues 1142-1169). Interacts with YWHAQ; the interaction requires KANK1 phosphorylation at Ser-325 and is enhanced by growth factor stimulation. Interacts with YWHAB, YWHAG, YWHAE, YWHAH, YWHAZ and SFN; the interaction requires KANK1 phosphorylation at Ser-325. Interacts with ARFGEF1; however, colocalization cannot be experimentally confirmed. Interacts with BAIAP2. Interacts with CTNNB1. Interacts (via coiled coil domain) with DAAM1 (via coiled coil domain).

It is found in the cytoplasm. It localises to the cell cortex. The protein resides in the cell projection. The protein localises to the ruffle membrane. Its subcellular location is the nucleus. Functionally, adapter protein that links structural and signaling protein complexes positioned to guide microtubule and actin cytoskeleton dynamics during cell morphogenesis. At focal adhesions (FAs) rims, organizes cortical microtubule stabilizing complexes (CMSCs) and directly interacts with major FA component TLN1, forming macromolecular assemblies positioned to control microtubule-actin crosstalk at the cell edge. Recruits KIF21A in CMSCs at axonal growth cones and regulates axon guidance by suppressing microtubule growth without inducing microtubule disassembly once it reaches the cell cortex. Interacts with ARFGEF1 and participates in establishing microtubule-organizing center (MTOC) orientation and directed cell movement in wound healing. Regulates actin stress fiber formation and cell migration by inhibiting RHOA activation in response to growth factors; this function involves phosphorylation through PI3K/Akt signaling and may depend on the competitive interaction with 14-3-3 adapter proteins to sequester them from active complexes. Inhibits the formation of lamellipodia but not of filopodia; this function may depend on the competitive interaction with BAIAP2 to block its association with activated RAC1. Inhibits fibronectin-mediated cell spreading; this function is partially mediated by BAIAP2. In the nucleus, is involved in beta-catenin-dependent activation of transcription. During cell division, may regulate DAAM1-dependent RHOA activation that signals centrosome maturation and chromosomal segregation. May also be involved in contractile ring formation during cytokinesis. Potential tumor suppressor for renal cell carcinoma. This chain is KN motif and ankyrin repeat domains 1, found in Mus musculus (Mouse).